The sequence spans 295 residues: Elongation factor Ts (295 aa).

An involved in Mg(2+) ion dislocation from EF-Tu region spans residues 79–82 (TDFV).

Belongs to the EF-Ts family.

It is found in the cytoplasm. Associates with the EF-Tu.GDP complex and induces the exchange of GDP to GTP. It remains bound to the aminoacyl-tRNA.EF-Tu.GTP complex up to the GTP hydrolysis stage on the ribosome. The protein is Elongation factor Ts of Bacillus cereus (strain B4264).